The chain runs to 126 residues: Profilin (126 aa).

The protein belongs to the profilin family. As to quaternary structure, occurs in many kinds of cells as a complex with monomeric actin in a 1:1 ratio.

Its subcellular location is the cytoplasm. The protein localises to the cytoskeleton. Its function is as follows. Binds to actin and affects the structure of the cytoskeleton. At high concentrations, profilin prevents the polymerization of actin, whereas it enhances it at low concentrations. By binding to PIP2, it inhibits the formation of IP3 and DG. The chain is Profilin from Bombyx mori (Silk moth).